Reading from the N-terminus, the 204-residue chain is U1 small nuclear ribonucleoprotein C (204 aa).

Residues 4 to 36 (FFCDYCDVYLTHDSMSVRKAHNSGRNHLRNVVD) form a Matrin-type zinc finger. Residues 65–204 (ANPMLPQNQP…GAGAPGHEKR (140 aa)) form a disordered region. Pro residues-rich tracts occupy residues 77-154 (GFPP…PGAP) and 166-192 (APPP…PGFA).

This sequence belongs to the U1 small nuclear ribonucleoprotein C family. U1 snRNP is composed of the 7 core Sm proteins B/B', D1, D2, D3, E, F and G that assemble in a heptameric protein ring on the Sm site of the small nuclear RNA to form the core snRNP, and at least 3 U1 snRNP-specific proteins U1-70K, U1-A and U1-C. U1-C interacts with U1 snRNA and the 5' splice-site region of the pre-mRNA.

It is found in the nucleus. Functionally, component of the spliceosomal U1 snRNP, which is essential for recognition of the pre-mRNA 5' splice-site and the subsequent assembly of the spliceosome. U1-C is directly involved in initial 5' splice-site recognition for both constitutive and regulated alternative splicing. The interaction with the 5' splice-site seems to precede base-pairing between the pre-mRNA and the U1 snRNA. Stimulates commitment or early (E) complex formation by stabilizing the base pairing of the 5' end of the U1 snRNA and the 5' splice-site region. The sequence is that of U1 small nuclear ribonucleoprotein C from Fusarium vanettenii (strain ATCC MYA-4622 / CBS 123669 / FGSC 9596 / NRRL 45880 / 77-13-4) (Fusarium solani subsp. pisi).